We begin with the raw amino-acid sequence, 92 residues long: Kinetoplastid membrane protein 11C (92 aa).

It belongs to the KMP-11 family. As to quaternary structure, monomer.

It localises to the cytoplasm. Its subcellular location is the cytoskeleton. The protein localises to the cell projection. The protein resides in the cilium. It is found in the flagellum. Its function is as follows. May be involved in the regulation of the cytoskeleton through interaction with the subpellicular microtubules. May be involved in parasite mobility and attachment to the surface of the host cell. Behaves as a strong immunogen during infection. The chain is Kinetoplastid membrane protein 11C (KMP-11C) from Leishmania infantum.